A 457-amino-acid polypeptide reads, in one-letter code: F-box/LRR-repeat protein At3g62440 (457 aa).

An F-box domain is found at methionine 1–serine 49. LRR repeat units follow at residues glycine 53–tryptophan 79, leucine 147–histidine 174, phenylalanine 177–glycine 202, tryptophan 229–aspartate 254, tryptophan 283–threonine 310, and leucine 337–glycine 362.

The protein is F-box/LRR-repeat protein At3g62440 of Arabidopsis thaliana (Mouse-ear cress).